Consider the following 485-residue polypeptide: Dipeptide and tripeptide permease C (485 aa).

The Cytoplasmic segment spans residues 1-12 (MKTPSQPRAIYY). Residues 13-33 (IVAIQIWEYFSFYGMRALLIL) form a helical membrane-spanning segment. At 34–46 (YLTHQLGFDDNHA) the chain is on the periplasmic side. A helical membrane pass occupies residues 47-67 (ISLFSAYASLVYVTPILGGWL). At 68–70 (ADR) the chain is on the cytoplasmic side. Residues 71–93 (LLGNRTAVIAGALLMTLGHVVLG) traverse the membrane as a helical segment. At 94–102 (IDTNSTFSL) the chain is on the periplasmic side. A helical transmembrane segment spans residues 103–125 (YLALAIIICGYGLFKSNISCLLG). At 126–140 (ELYDENDHRRDGGFS) the chain is on the cytoplasmic side. A helical membrane pass occupies residues 141-161 (LLYAAGNIGSIAAPIACGLAA). Over 162–164 (QWY) the chain is Periplasmic. The helical transmembrane segment at 165 to 185 (GWHVGFALAGGGMFIGLLIFL) threads the bilayer. Topologically, residues 186–208 (SGHRHFQSTRSMDKKALTSVKFA) are cytoplasmic. Residues 209-229 (LPVWSWLVVMLCLAPVFFTLL) traverse the membrane as a helical segment. The Periplasmic segment spans residues 230-234 (LENDW). The chain crosses the membrane as a helical span at residues 235–255 (SGYLLAIVCLIAAQIIARMMI). Over 256–262 (KFPEHRR) the chain is Cytoplasmic. The chain crosses the membrane as a helical span at residues 263–283 (ALWQIVLLMFVGTLFWVLAQQ). Residues 284–307 (GGSTISLFIDRFVNRQAFNIEVPT) are Periplasmic-facing. A helical membrane pass occupies residues 308–328 (ALFQSVNAIAVMLAGVVLAWL). The Cytoplasmic portion of the chain corresponds to 329–340 (ASPESRGNSTLR). A helical membrane pass occupies residues 341–361 (VWLKFAFGLLLMACGFMLLAF). Topologically, residues 362-375 (DARHAAADGQASMG) are periplasmic. Residues 376 to 396 (VMISGLALMGFAELFIDPVAI) traverse the membrane as a helical segment. Over 397-406 (AQITRLKMSG) the chain is Cytoplasmic. The chain crosses the membrane as a helical span at residues 407 to 427 (VLTGIYMLATGAVANWLAGVV). The Periplasmic portion of the chain corresponds to 428-446 (AQQTTESQISGMAIAAYQR). Residues 447 to 467 (FFSQMGEWTLACVAIIVVLAF) traverse the membrane as a helical segment. Residues 468–485 (ATRFLFSTPTNMIQESND) are Cytoplasmic-facing.

The protein belongs to the major facilitator superfamily. Proton-dependent oligopeptide transporter (POT/PTR) (TC 2.A.17) family. In terms of assembly, monomer.

It is found in the cell inner membrane. In terms of biological role, proton-dependent permease that transports di- and tripeptides. Shows significantly higher specificity towards dipeptides than tripeptides. Has a preference for dipeptides with a C-terminal Lys residue. Can bind Ala-Lys, Lys-Ala, Ala-Ala. Can also transport alanine and trialanine. This chain is Dipeptide and tripeptide permease C, found in Escherichia coli (strain K12).